We begin with the raw amino-acid sequence, 124 residues long: Fluoride-specific ion channel FluC (124 aa).

The next 4 helical transmembrane spans lie at 3-23 (VLLI…VSNL), 34-54 (IGTL…FIFI), 68-88 (LLLI…IETF), and 100-120 (ALNV…GVLI). Na(+) contacts are provided by glycine 75 and threonine 78.

Belongs to the fluoride channel Fluc/FEX (TC 1.A.43) family.

Its subcellular location is the cell inner membrane. The enzyme catalyses fluoride(in) = fluoride(out). Its activity is regulated as follows. Na(+) is not transported, but it plays an essential structural role and its presence is essential for fluoride channel function. Fluoride-specific ion channel. Important for reducing fluoride concentration in the cell, thus reducing its toxicity. The chain is Fluoride-specific ion channel FluC from Coxiella burnetii (strain CbuK_Q154) (Coxiella burnetii (strain Q154)).